Consider the following 282-residue polypeptide: Bis(5'-nucleosyl)-tetraphosphatase, symmetrical (282 aa).

Belongs to the Ap4A hydrolase family.

It carries out the reaction P(1),P(4)-bis(5'-adenosyl) tetraphosphate + H2O = 2 ADP + 2 H(+). Hydrolyzes diadenosine 5',5'''-P1,P4-tetraphosphate to yield ADP. This Enterobacter sp. (strain 638) protein is Bis(5'-nucleosyl)-tetraphosphatase, symmetrical.